The sequence spans 269 residues: Phosphonoacetaldehyde hydrolase (269 aa).

The active-site Nucleophile is the Asp9. Residues Asp9 and Ala11 each contribute to the Mg(2+) site. Lys50 functions as the Schiff-base intermediate with substrate in the catalytic mechanism. Position 184 (Asp184) interacts with Mg(2+).

The protein belongs to the HAD-like hydrolase superfamily. PhnX family. Homodimer. Mg(2+) is required as a cofactor.

It carries out the reaction phosphonoacetaldehyde + H2O = acetaldehyde + phosphate + H(+). Involved in phosphonate degradation. The polypeptide is Phosphonoacetaldehyde hydrolase (Lysinibacillus sphaericus (strain C3-41)).